A 460-amino-acid chain; its full sequence is CUGBP Elav-like family member 6 (460 aa).

A compositionally biased stretch (low complexity) spans 1-10 (MAAAPGGSAP). The tract at residues 1-37 (MAAAPGGSAPPAGPSPRLAFSTADSGGGMSGLNPGPA) is disordered. RRM domains follow at residues 46–127 (IKLF…PAAS) and 134–214 (RKLF…LADT). A disordered region spans residues 316–336 (NGFGSLTPQSNGQPGSDTLYN). Residues 319–336 (GSLTPQSNGQPGSDTLYN) show a composition bias toward polar residues. Residues 375–453 (CNLFIYHLPQ…KRLKVQLKRP (79 aa)) enclose the RRM 3 domain.

Belongs to the CELF/BRUNOL family.

It localises to the nucleus. It is found in the cytoplasm. RNA-binding protein implicated in the regulation of pre-mRNA alternative splicing. Mediates exon inclusion and/or exclusion in pre-mRNA that are subject to tissue-specific and developmentally regulated alternative splicing. Specifically activates exon 5 inclusion of TNNT2 in a muscle-specific splicing enhancer (MSE)-dependent manner. Promotes also exon exclusion of INSR pre-mRNA. This Mus musculus (Mouse) protein is CUGBP Elav-like family member 6 (Celf6).